A 437-amino-acid polypeptide reads, in one-letter code: tRNA-2-methylthio-N(6)-dimethylallyladenosine synthase (437 aa).

Positions 1–115 (MKVYIETMGC…ISQVIHKEKA (115 aa)) constitute an MTTase N-terminal domain. [4Fe-4S] cluster is bound by residues Cys10, Cys46, Cys78, Cys148, Cys152, and Cys155. Positions 134–367 (KKAQIRSLLN…QNRHKEILEE (234 aa)) constitute a Radical SAM core domain. The TRAM domain occupies 370–436 (KLEVGKTHVV…KGRLIAAIKG (67 aa)).

This sequence belongs to the methylthiotransferase family. MiaB subfamily. As to quaternary structure, monomer. Requires [4Fe-4S] cluster as cofactor.

It localises to the cytoplasm. The catalysed reaction is N(6)-dimethylallyladenosine(37) in tRNA + (sulfur carrier)-SH + AH2 + 2 S-adenosyl-L-methionine = 2-methylsulfanyl-N(6)-dimethylallyladenosine(37) in tRNA + (sulfur carrier)-H + 5'-deoxyadenosine + L-methionine + A + S-adenosyl-L-homocysteine + 2 H(+). Its function is as follows. Catalyzes the methylthiolation of N6-(dimethylallyl)adenosine (i(6)A), leading to the formation of 2-methylthio-N6-(dimethylallyl)adenosine (ms(2)i(6)A) at position 37 in tRNAs that read codons beginning with uridine. The protein is tRNA-2-methylthio-N(6)-dimethylallyladenosine synthase of Helicobacter pylori (strain HPAG1).